Here is a 440-residue protein sequence, read N- to C-terminus: Transposon Ty1-LR2 Gag polyprotein (440 aa).

Polar residues-rich tracts occupy residues 1-23, 48-60, and 127-152; these read MESQQLSQHSPISHGSACASVTS, TKANSQQTTTPAS, and QSQFPQYPSSVGTPLSTPSPESGNTF. Disordered regions lie at residues 1–93, 126–174, and 352–440; these read MESQ…MMTQ, PQSQ…PPPM, and GSRN…PGTY. Over residues 153–165 the composition is skewed to low complexity; that stretch reads TDSSSADSDMTST. The tract at residues 299–401 is RNA-binding; it reads NNGIHINNKV…NSKSKTARAH (103 aa). The span at 402-418 shows a compositional bias: low complexity; sequence NVSTSNNSPSTDNDSIS. The residue at position 416 (Ser-416) is a Phosphoserine. A compositionally biased stretch (polar residues) spans 419-428; the sequence is KSTTEPIQLN. The span at 429-440 shows a compositional bias: basic and acidic residues; it reads NKHDLHLRPGTY.

Homotrimer.

The protein resides in the cytoplasm. Capsid protein (CA) is the structural component of the virus-like particle (VLP), forming the shell that encapsulates the retrotransposons dimeric RNA genome. The particles are assembled from trimer-clustered units and there are holes in the capsid shells that allow for the diffusion of macromolecules. CA also has nucleocapsid-like chaperone activity, promoting primer tRNA(i)-Met annealing to the multipartite primer-binding site (PBS), dimerization of Ty1 RNA and initiation of reverse transcription. The sequence is that of Transposon Ty1-LR2 Gag polyprotein (TY1A-LR2) from Saccharomyces cerevisiae (strain ATCC 204508 / S288c) (Baker's yeast).